The sequence spans 432 residues: Enolase (432 aa).

Position 167 (Gln-167) interacts with (2R)-2-phosphoglycerate. Catalysis depends on Glu-209, which acts as the Proton donor. Asp-246, Glu-291, and Asp-318 together coordinate Mg(2+). Lys-343, Arg-372, Ser-373, and Lys-394 together coordinate (2R)-2-phosphoglycerate. The active-site Proton acceptor is the Lys-343.

The protein belongs to the enolase family. As to quaternary structure, component of the RNA degradosome, a multiprotein complex involved in RNA processing and mRNA degradation. The cofactor is Mg(2+).

Its subcellular location is the cytoplasm. It is found in the secreted. The protein localises to the cell surface. The enzyme catalyses (2R)-2-phosphoglycerate = phosphoenolpyruvate + H2O. It functions in the pathway carbohydrate degradation; glycolysis; pyruvate from D-glyceraldehyde 3-phosphate: step 4/5. Functionally, catalyzes the reversible conversion of 2-phosphoglycerate (2-PG) into phosphoenolpyruvate (PEP). It is essential for the degradation of carbohydrates via glycolysis. The chain is Enolase from Aliivibrio fischeri (strain MJ11) (Vibrio fischeri).